A 77-amino-acid polypeptide reads, in one-letter code: MSRNPIERCIRDSLDTYYRDLDGENPSNVYDMVLQAIERPLLETVMEWASNNQSLAADYLGINRNTLRKKLQQHGLL.

The segment at residues 53–72 (QSLAADYLGINRNTLRKKLQ) is a DNA-binding region (H-T-H motif).

Belongs to the transcriptional regulatory Fis family.

This Ralstonia nicotianae (strain ATCC BAA-1114 / GMI1000) (Ralstonia solanacearum) protein is Putative Fis-like DNA-binding protein.